Here is a 486-residue protein sequence, read N- to C-terminus: Outer dynein arm-docking complex subunit 4 (486 aa).

TPR repeat units lie at residues 14-47 (FTTYMAEGDQLFQRGEYVKAVESFTTALTLQPDD), 49-81 (NCLVSRSRCYVKLGDAENALKDAESSLKDNKNY), and 82-115 (FKGLYQKAEALYTMGDFEFALVYYHRGHKLRPEL). The interval 153 to 180 (GVHPQNLNPSNKKESKKHSKKTDKGEKT) is disordered. TPR repeat units lie at residues 314–347 (GNLHSYIGNALMDLGNMDRALHHHEKDLELAKKC), 354–387 (SRALDNIGRVYARIGKFQQAIEVWEKKLPLACGG), 391–424 (AWLFHEIGRCYLELKRYMEARDYGSRSLMAADDI), and 431–464 (LNASVLMAQAELKLSNYKASVLHFERALERAKLL).

Component of the outer dynein arm-docking complex along with ODAD1, ODAD2 and ODAD3.

The protein resides in the cytoplasm. It localises to the cytoskeleton. The protein localises to the cilium axoneme. Component of the outer dynein arm-docking complex (ODA-DC) that mediates outer dynein arms (ODA) binding onto the doublet microtubule. Plays an essential role for the assembly of ODA-DC and in the docking of ODA in ciliary axoneme. In Danio rerio (Zebrafish), this protein is Outer dynein arm-docking complex subunit 4 (odad4).